The chain runs to 282 residues: MILIDGKSLSKDLKERLATQVQEYKHHTAITPKLVAIIVGNDPASKTYVASKEKACAQVGIDSQVITLPEHTTESELLELIDQLNNDSSVHAILVQLPLPAHINKNNVIYSIKPEKDVDGFHPTNVGRLQLRDKKCLESCTPKGIMTMLREYGIKTEGAYVVVVGASNVVGKPVSQLLLNAKATVTTCHRFTTDLKSHTTKADILIVAVGKPNFITADMVKEGAVVIDVGINHVDGKIVGDVDFAAVKDKVAAITPVPGGVGPMTITELLYNTFQCAQELNR.

Residues 165 to 167 (GAS) and I231 contribute to the NADP(+) site.

This sequence belongs to the tetrahydrofolate dehydrogenase/cyclohydrolase family. As to quaternary structure, homodimer.

It catalyses the reaction (6R)-5,10-methylene-5,6,7,8-tetrahydrofolate + NADP(+) = (6R)-5,10-methenyltetrahydrofolate + NADPH. The catalysed reaction is (6R)-5,10-methenyltetrahydrofolate + H2O = (6R)-10-formyltetrahydrofolate + H(+). Its pathway is one-carbon metabolism; tetrahydrofolate interconversion. Its function is as follows. Catalyzes the oxidation of 5,10-methylenetetrahydrofolate to 5,10-methenyltetrahydrofolate and then the hydrolysis of 5,10-methenyltetrahydrofolate to 10-formyltetrahydrofolate. The polypeptide is Bifunctional protein FolD (Francisella tularensis subsp. holarctica (strain FTNF002-00 / FTA)).